Consider the following 296-residue polypeptide: Myeloid differentiation primary response protein MyD88 (296 aa).

A Death domain is found at 54–109; that stretch reads MDFEYLEIRQLETQADPTGRLLDAWQGRPGASVGRLLELLTKLGRDDVLLELGPSI. Residues 110 to 155 form an intermediate domain region; sequence EEDCQKYILKQQQEEAEKPLQVAAVDSSVPRTAELAGITTLDDPLG. The TIR domain maps to 159-293; it reads ERFDAFICYC…WFWTRLAKAL (135 aa). Position 244 is a phosphoserine (serine 244).

As to quaternary structure, homodimer. Also forms heterodimers with TIRAP. Binds to TLR2, TLR5, IRAK1, IRAK2 and IRAK4 via their respective TIR domains. Interacts with IL18R1. Interacts with BMX, IL1RL1, IKBKE and IRF7. Interacts with LRRFIP1 and LRRFIP2; this interaction positively regulates Toll-like receptor (TLR) signaling in response to agonist. Interacts with FLII. LRRFIP1 and LRRFIP2 compete with FLII for MYD88-binding. Interacts with IRF1. Upon IL1B treatment, forms a complex with PELI1, IRAK1, IRAK4 and TRAF6; this complex recruits MAP3K7/TAK1, TAB1 and TAB2 to mediate NF-kappa-B activation. Direct binding of SMAD6 to PELI1 prevents the complex formation and hence negatively regulates IL1R-TLR signaling and eventually NF-kappa-B-mediated gene expression. May interact with PIK3AP1. Interacts (via TIR domain) with DHX9 (via H2A and OB-fold regions); this interaction is direct. Interacts with OTUD4 deubiquitinase; the interaction is direct. Interacts with TLR4. (Microbial infection) In case of infection, interacts with uropathogenic E.coli protein TcpC; suppressing Toll-like receptor (TLR)-mediated cytokine production. In terms of assembly, (Microbial infection) In case of infection, interacts with uropathogenic E.faecalis protein TcpF; suppressing Toll-like receptor (TLR)-mediated cytokine production. As to quaternary structure, (Microbial infection) In case of infection, interacts with B.melitensis protein TcpB. (Microbial infection) Interacts with human metapneumovirus protein M2-2; this interaction prevents MYD88-mediated cytokine secretion. In terms of processing, ubiquitinated; undergoes 'Lys-63'-linked polyubiquitination. OTUD4 specifically hydrolyzes 'Lys-63'-linked polyubiquitinated MYD88. Deubiquitinated by USP3 that cleaves 'Lys-63'-linked ubiquitin chains leading to inhibition of MYD88-induced NF-kappa-B signaling. Post-translationally, (Microbial infection) Ubiquitinated by human herpesvirus 8 (KSHV) protein RTA/ORF50, leading to proteasomal degradation ans suppression of TLR4 signaling pathway. Ubiquitous.

Its subcellular location is the cytoplasm. It is found in the nucleus. Adapter protein involved in the Toll-like receptor and IL-1 receptor signaling pathway in the innate immune response. Acts via IRAK1, IRAK2, IRF7 and TRAF6, leading to NF-kappa-B activation, cytokine secretion and the inflammatory response. Increases IL-8 transcription. Involved in IL-18-mediated signaling pathway. Activates IRF1 resulting in its rapid migration into the nucleus to mediate an efficient induction of IFN-beta, NOS2/INOS, and IL12A genes. Upon TLR8 activation by GU-rich single-stranded RNA (GU-rich RNA) derived from viruses such as SARS-CoV-2, SARS-CoV and HIV-1, induces IL1B release through NLRP3 inflammasome activation. MyD88-mediated signaling in intestinal epithelial cells is crucial for maintenance of gut homeostasis and controls the expression of the antimicrobial lectin REG3G in the small intestine. This Homo sapiens (Human) protein is Myeloid differentiation primary response protein MyD88.